A 1001-amino-acid chain; its full sequence is 2-oxoglutarate dehydrogenase E1 component (1001 aa).

Belongs to the alpha-ketoglutarate dehydrogenase family. In terms of assembly, homodimer. Part of the 2-oxoglutarate dehydrogenase (OGDH) complex composed of E1 (2-oxoglutarate dehydrogenase), E2 (dihydrolipoamide succinyltransferase) and E3 (dihydrolipoamide dehydrogenase); the complex contains multiple copies of the three enzymatic components (E1, E2 and E3). Thiamine diphosphate serves as cofactor.

The catalysed reaction is N(6)-[(R)-lipoyl]-L-lysyl-[protein] + 2-oxoglutarate + H(+) = N(6)-[(R)-S(8)-succinyldihydrolipoyl]-L-lysyl-[protein] + CO2. In terms of biological role, E1 component of the 2-oxoglutarate dehydrogenase (OGDH) complex which catalyzes the decarboxylation of 2-oxoglutarate, the first step in the conversion of 2-oxoglutarate to succinyl-CoA and CO(2). The sequence is that of 2-oxoglutarate dehydrogenase E1 component from Brucella anthropi (strain ATCC 49188 / DSM 6882 / CCUG 24695 / JCM 21032 / LMG 3331 / NBRC 15819 / NCTC 12168 / Alc 37) (Ochrobactrum anthropi).